The chain runs to 487 residues: Transcription factor GTE5, chloroplastic (487 aa).

The N-terminal 32 residues, 1-32, are a transit peptide targeting the chloroplast; that stretch reads MSSEHISGGGASKTKKHKWSSSQNRPKPMGVS. Disordered stretches follow at residues 1-48, 93-127, and 400-487; these read MSSE…NSFA, ANPGGSMAKSGVVGRSKKVKTGNGGGKKSGHGADK, and KNEA…DNGN. Residues 127-233 enclose the Bromo domain; the sequence is KGTVQIFKNC…NMFEDKWVSI (107 aa). The NET domain occupies 320–401; that stretch reads EEEAPVNNRD…GYKESLSKKN (82 aa). Positions 400–414 are enriched in basic and acidic residues; the sequence is KNEAHGFGSERDAES. The span at 415–435 shows a compositional bias: polar residues; it reads VHNSIQEPTTLVSGTTTSRVT. Residues 451–487 are compositionally biased toward low complexity; the sequence is NNASGSSSSNSSSSDSGSCSSDTDSDSSSGRGSDNGN.

As to quaternary structure, interacts with SIZ1 (via PHD domain). Post-translationally, sumoylated by SIZ1.

Its subcellular location is the plastid. It is found in the chloroplast. The polypeptide is Transcription factor GTE5, chloroplastic (GTE5) (Arabidopsis thaliana (Mouse-ear cress)).